The following is a 315-amino-acid chain: Probable inactive acetaldehyde dehydrogenase 1 (315 aa).

NAD(+) contacts are provided by residues 14–17 (SGDV) and Asn288.

The protein belongs to the acetaldehyde dehydrogenase family.

The sequence is that of Probable inactive acetaldehyde dehydrogenase 1 from Mycolicibacterium vanbaalenii (strain DSM 7251 / JCM 13017 / BCRC 16820 / KCTC 9966 / NRRL B-24157 / PYR-1) (Mycobacterium vanbaalenii).